The sequence spans 662 residues: Transmembrane 9 superfamily member 2 (662 aa).

A signal peptide spans 1–28 (MSSRPPASPPAQGSRLLLLSLLLLGTVP). Residues 29–299 (GPRPGSAFYL…LESMPHTHIQ (271 aa)) lie on the Lumenal side of the membrane. A helical membrane pass occupies residues 300–320 (WFSIMNSLVIVLFLSGMVAMI). Residues 321–373 (MLRTLHKDIARYNQMDSTEDAQEEFGWKLVHGDIFRPPRKGMLLSVFLGSGTQ) are Cytoplasmic-facing. A helical membrane pass occupies residues 374–394 (ILIMTFVTLFFACLGFLSPAN). Topologically, residues 395–397 (RGA) are lumenal. Residues 398-418 (LMTCAVVLWVLLGTPAGYVAA) traverse the membrane as a helical segment. Residues 419–436 (RFYKSFGGEKWKTNVLLT) lie on the Cytoplasmic side of the membrane. The chain crosses the membrane as a helical span at residues 437–457 (SFLCPGIVFADFFIMNLILWG). Residues 458–465 (EGSSAAIP) are Lumenal-facing. Residues 466–486 (FGTLVAILALWFCISVPLTFI) form a helical membrane-spanning segment. Topologically, residues 487 to 521 (GAYFGFKKNAIEHPVRTNQIPRQIPEQSFYTKPLP) are cytoplasmic. The chain crosses the membrane as a helical span at residues 522–542 (GIIMGGILPFGCIFIQLFFIL). Residues 543 to 553 (NSIWSHQMYYM) lie on the Lumenal side of the membrane. Residues 554 to 574 (FGFLFLVFIILVITCSEATIL) traverse the membrane as a helical segment. The Cytoplasmic portion of the chain corresponds to 575 to 590 (LCYFHLCAEDYHWQWR). Residues 591–611 (SFLTSGFTAVYFLIYAIHYFF) form a helical membrane-spanning segment. Topologically, residues 612 to 630 (SKLQITGTASTILYFGYTM) are lumenal. The chain crosses the membrane as a helical span at residues 631 to 651 (IMVLIFFLFTGTIGFFACFWF). The Cytoplasmic portion of the chain corresponds to 652–662 (VTKIYSVVKVD).

Belongs to the nonaspanin (TM9SF) (TC 9.A.2) family.

It localises to the endosome membrane. The protein resides in the golgi outpost. The protein localises to the cytoplasm. It is found in the cytoskeleton. Its subcellular location is the microtubule organizing center. Its function is as follows. In the intracellular compartments, may function as a channel or small molecule transporter. This Mus musculus (Mouse) protein is Transmembrane 9 superfamily member 2 (Tm9sf2).